Consider the following 3412-residue polypeptide: Genome polyprotein (3412 aa).

The Cytoplasmic segment spans residues 1 to 104 (MSGRKAQGKT…LSSRKRRSSE (104 aa)). The tract at residues 38–72 (PGPSRGVQGFIFFFLFNILTGKKLTTHLKRLWRML) is hydrophobic; homodimerization of capsid protein C. A propeptide spans 102–121 (SSEMTMMPLLILSMVILGGG) (ER anchor for the capsid protein C, removed in mature form by serine protease NS3). The chain crosses the membrane as a helical span at residues 105-125 (MTMMPLLILSMVILGGGVTLV). The Extracellular segment spans residues 126-244 (RKNRWLLLNV…GERQLQKIER (119 aa)). N-linked (GlcNAc...) asparagine; by host glycosylation is found at N134 and N150. A helical transmembrane segment spans residues 245–265 (WLVRNPFFAVTALAIAYLVGN). At 266-270 (NKTQR) the chain is on the cytoplasmic side. A helical membrane pass occupies residues 271-285 (VVIALLVLAVGPAYS). The Extracellular portion of the chain corresponds to 286–730 (AHCIGITDRD…TVFGSAFQGL (445 aa)). Cystine bridges form between C288–C315, C345–C401, C345–C406, C359–C390, C377–C401, C377–C406, C467–C568, and C585–C615. A fusion peptide region spans residues 383–396 (DRGWGNGCGLFGKG). The chain crosses the membrane as a helical span at residues 731-751 (FGGLSWITKVIMGAVLIWVGI). Residues 752–757 (NTRNMT) are Extracellular-facing. The helical transmembrane segment at 758-778 (MSMSMILVGVIMMFLSLGVGA) threads the bilayer. Residues 779-1132 (DQGCAVNFGK…LVRSWVTAGE (354 aa)) lie on the Extracellular side of the membrane. Disulfide bonds link C782–C793, C833–C921, C957–C1002, C1058–C1107, C1069–C1091, and C1090–C1094. N908 and N986 each carry an N-linked (GlcNAc...) asparagine; by host glycan. Residues 1133–1153 (VHAVPFGLVSMMIAMEVVLRK) form a helical membrane-spanning segment. Residues 1154-1201 (RQGPKQMLVGGIILLGAMLVGQVTMLDLVKLIVAVGLHFHEINNGGDA) are Cytoplasmic-facing. Residues 1202–1222 (MYMALIASFSIRPGLLIGFGL) traverse the membrane as a helical segment. The Lumenal portion of the chain corresponds to 1223 to 1287 (RTLWSPRERL…ILPLMALLTP (65 aa)). Residues 1288–1308 (VTMYEVRMATMLFCTVVIVGV) form a helical membrane-spanning segment. The Cytoplasmic segment spans residues 1309-1355 (LHQNSKDTSMQKTIPIVALTLTSYMGLTQPFLGLCAYMSTQVFGRRS). A helical membrane pass occupies residues 1356–1376 (IPVNEALAAAGLVGVLAGLAF). Residues 1377–1378 (QD) are Lumenal-facing. Residues 1379–1399 (MENFLGPIAVGGILMMLVSVA) form a helical membrane-spanning segment. Residues 1400–1456 (GKVDGLELKKLGEVSWEEEAEISGSSSRYDVALSEQGEFKLLSEDKVPWDQIVMTSL) are Cytoplasmic-facing. The interacts with and activates NS3 protease stretch occupies residues 1407 to 1446 (LKKLGEVSWEEEAEISGSSSRYDVALSEQGEFKLLSEDKV). An intramembrane region (helical) is located at residues 1457-1477 (ALVGAAIHPFALLLVLGGWVL). Residues 1478 to 2157 (HIKGARRSGD…RNALSMMPEA (680 aa)) lie on the Cytoplasmic side of the membrane. Residues 1485–1665 (SGDVLWDIPT…EVKEESKEEL (181 aa)) enclose the Peptidase S7 domain. Residues H1537, D1561, and S1622 each act as charge relay system; for serine protease NS3 activity in the active site. Residues 1669 to 1825 (PTMLKKGMTT…HSNGEIEDVQ (157 aa)) form the Helicase ATP-binding domain. The interval 1673 to 1676 (KKGM) is important for RNA-binding. 1682–1689 (FHPGAGKT) serves as a coordination point for ATP. The DEAH box motif lies at 1773 to 1776 (DEAH). Residues 1820–1997 (EIEDVQTDIP…VRGGMVAPLY (178 aa)) enclose the Helicase C-terminal domain. K1877 is modified (N6-acetyllysine; by host). A disordered region spans residues 1942–1961 (AAQRRGRIGRNPNRDGDSYY). A helical membrane pass occupies residues 2158–2178 (MTIVMLFILAGLLTSGMVIFF). The Lumenal segment spans residues 2179 to 2186 (MSPKGMSR). Residues 2187-2207 (MSMAMGTMAGSGYLMFLGGVK) constitute an intramembrane region (helical). Topologically, residues 2208–2209 (PT) are lumenal. A helical membrane pass occupies residues 2210–2230 (HISYVMLIFFVLMVVIIPEPG). The Cytoplasmic segment spans residues 2231 to 2241 (QQRSIQDNQVA). The helical transmembrane segment at 2242 to 2262 (YLIIGILTLLSVVAANELGML) threads the bilayer. The Lumenal portion of the chain corresponds to 2263–2293 (EKTKEDFFGKRNIATSGGTIPWSWPDLDLKP). The segment at residues 2294 to 2314 (GAAWTVYVGIVTMLSPMLHHW) is an intramembrane region (helical). Over 2315–2360 (IKVEYGNLSLSGIAQSASVLSFMDKGVPFMKMNISVVILLVSGWNS) the chain is Lumenal. Residues 2361 to 2380 (ITVIPLLCGVGGAMLHWTLI) form a helical membrane-spanning segment. Topologically, residues 2381–2421 (LPGIKAQQSKLAQKRVFHGVAKNPVVDGNPTADIEEAPEMP) are cytoplasmic. The helical transmembrane segment at 2422–2442 (ALYEKKLALYLLLALSLMSVA) threads the bilayer. At 2443-2445 (MCR) the chain is on the lumenal side. The helical transmembrane segment at 2446–2466 (TPFSLAEGIVLSSAALGPLIE) threads the bilayer. At 2467–3411 (GNTSLLWNGP…VDADLQPGEL (945 aa)) the chain is on the cytoplasmic side. The mRNA cap 0-1 NS5-type MT domain maps to 2508–2772 (GSANGKTLGE…DVILPIGTRS (265 aa)). Residue S2563 participates in S-adenosyl-L-methionine binding. The residue at position 2563 (S2563) is a Phosphoserine. K2568 functions as the For 2'-O-MTase activity in the catalytic mechanism. The S-adenosyl-L-methionine site is built by G2593, W2594, T2611, L2612, D2638, and I2639. D2653 serves as the catalytic For 2'-O-MTase activity. Position 2654 (I2654) interacts with S-adenosyl-L-methionine. Catalysis depends on for 2'-O-MTase activity residues K2689 and E2725. Y2727 is an S-adenosyl-L-methionine binding site. The short motif at 2879–2912 (RKIMRVVNRWLFRHLAREKKPRLCTKEEFIAKVR) is the Nuclear localization signal element. Zn(2+) is bound by residues E2946, H2950, C2955, and C2958. Residues 3036-3188 (GGFYADDTAG…KPVDDRFGLA (153 aa)) form the RdRp catalytic domain. Zn(2+) is bound by residues H3223, C3239, and C3358.

In the N-terminal section; belongs to the class I-like SAM-binding methyltransferase superfamily. mRNA cap 0-1 NS5-type methyltransferase family. Homodimer. Interacts (via N-terminus) with host EXOC1 (via C-terminus); this interaction results in EXOC1 degradation through the proteasome degradation pathway. As to quaternary structure, forms heterodimers with envelope protein E in the endoplasmic reticulum and Golgi. In terms of assembly, homodimer; in the endoplasmic reticulum and Golgi. Interacts with protein prM. Interacts with non-structural protein 1. Homodimer; Homohexamer when secreted. Interacts with envelope protein E. As to quaternary structure, interacts (via N-terminus) with serine protease NS3. In terms of assembly, forms a heterodimer with serine protease NS3. May form homooligomers. Forms a heterodimer with NS2B. Interacts with non-structural protein 2A (via N-terminus). Interacts with NS4B. Interacts with unphosphorylated RNA-directed RNA polymerase NS5; this interaction stimulates RNA-directed RNA polymerase NS5 guanylyltransferase activity. NS3 interacts with host PDCD6IP; this interaction contributes to virion release. As to quaternary structure, interacts with serine protease NS3. In terms of assembly, homodimer. Interacts with host STAT2; this interaction prevents the establishment of cellular antiviral state. Interacts with serine protease NS3. Interacts with host TRIM23; this interaction leads to NS5 ubiquitination. Specific enzymatic cleavages in vivo yield mature proteins. The nascent capsid protein C contains a C-terminal hydrophobic domain that act as a signal sequence for translocation of prM into the lumen of the ER. Mature capsid protein C is cleaved at a site upstream of this hydrophobic domain by NS3. prM is cleaved in post-Golgi vesicles by a host furin, releasing the mature small envelope protein M, and peptide pr. Non-structural protein 2A-alpha, a C-terminally truncated form of non-structural protein 2A, results from partial cleavage by NS3. Specific enzymatic cleavages in vivo yield mature proteins peptide 2K acts as a signal sequence and is removed from the N-terminus of NS4B by the host signal peptidase in the ER lumen. Signal cleavage at the 2K-4B site requires a prior NS3 protease-mediated cleavage at the 4A-2K site. In terms of processing, cleaved in post-Golgi vesicles by a host furin, releasing the mature small envelope protein M, and peptide pr. This cleavage is incomplete as up to 30% of viral particles still carry uncleaved prM. Post-translationally, N-glycosylated. N-glycosylated. The excreted form is glycosylated and this is required for efficient secretion of the protein from infected cells. In terms of processing, polyubiquitinated; ubiquitination is probably mediated by host TRIM23 and is prerequisite for NS5-STAT2 interaction. NS5 is not ISGylated or sumoylated. Post-translationally, acetylated by host KAT5. Acetylation modulates NS3 RNA-binding and unwinding activities and plays an important positive role for viral replication. Phosphorylated on serines residues. This phosphorylation may trigger NS5 nuclear localization.

The protein resides in the virion. It localises to the host nucleus. Its subcellular location is the host cytoplasm. The protein localises to the host perinuclear region. It is found in the secreted. The protein resides in the virion membrane. It localises to the host endoplasmic reticulum membrane. It carries out the reaction Selective hydrolysis of -Xaa-Xaa-|-Yaa- bonds in which each of the Xaa can be either Arg or Lys and Yaa can be either Ser or Ala.. The enzyme catalyses RNA(n) + a ribonucleoside 5'-triphosphate = RNA(n+1) + diphosphate. It catalyses the reaction a ribonucleoside 5'-triphosphate + H2O = a ribonucleoside 5'-diphosphate + phosphate + H(+). The catalysed reaction is ATP + H2O = ADP + phosphate + H(+). It carries out the reaction a 5'-end (5'-triphosphoguanosine)-ribonucleoside in mRNA + S-adenosyl-L-methionine = a 5'-end (N(7)-methyl 5'-triphosphoguanosine)-ribonucleoside in mRNA + S-adenosyl-L-homocysteine. The enzyme catalyses a 5'-end (N(7)-methyl 5'-triphosphoguanosine)-ribonucleoside in mRNA + S-adenosyl-L-methionine = a 5'-end (N(7)-methyl 5'-triphosphoguanosine)-(2'-O-methyl-ribonucleoside) in mRNA + S-adenosyl-L-homocysteine + H(+). In terms of biological role, plays a role in virus budding by binding to the cell membrane and gathering the viral RNA into a nucleocapsid that forms the core of a mature virus particle. During virus entry, may induce genome penetration into the host cytoplasm after hemifusion induced by the surface proteins. Can migrate to the cell nucleus where it modulates host functions. Its function is as follows. Inhibits RNA silencing by interfering with host Dicer. Functionally, prevents premature fusion activity of envelope proteins in trans-Golgi by binding to envelope protein E at pH6.0. After virion release in extracellular space, gets dissociated from E dimers. Acts as a chaperone for envelope protein E during intracellular virion assembly by masking and inactivating envelope protein E fusion peptide. prM is the only viral peptide matured by host furin in the trans-Golgi network probably to avoid catastrophic activation of the viral fusion activity in acidic Golgi compartment prior to virion release. prM-E cleavage is inefficient, and many virions are only partially matured. These uncleaved prM would play a role in immune evasion. In terms of biological role, may play a role in virus budding. Exerts cytotoxic effects by activating a mitochondrial apoptotic pathway through M ectodomain. May display a viroporin activity. Its function is as follows. Binds to host cell surface receptor and mediates fusion between viral and cellular membranes. Envelope protein is synthesized in the endoplasmic reticulum in the form of heterodimer with protein prM. They play a role in virion budding in the ER, and the newly formed immature particle is covered with 60 spikes composed of heterodimer between precursor prM and envelope protein E. The virion is transported to the Golgi apparatus where the low pH causes dissociation of PrM-E heterodimers and formation of E homodimers. prM-E cleavage is inefficient, and many virions are only partially matured. These uncleaved prM would play a role in immune evasion. Functionally, involved in immune evasion, pathogenesis and viral replication. Once cleaved off the polyprotein, is targeted to three destinations: the viral replication cycle, the plasma membrane and the extracellular compartment. Essential for viral replication. Required for formation of the replication complex and recruitment of other non-structural proteins to the ER-derived membrane structures. Excreted as a hexameric lipoparticle that plays a role against host immune response. Antagonizing the complement function. Binds to the host macrophages and dendritic cells. Inhibits signal transduction originating from Toll-like receptor 3 (TLR3). Component of the viral RNA replication complex that functions in virion assembly and antagonizes the host immune response. In terms of biological role, required cofactor for the serine protease function of NS3. May have membrane-destabilizing activity and form viroporins. Its function is as follows. Displays three enzymatic activities: serine protease, NTPase and RNA helicase. NS3 serine protease, in association with NS2B, performs its autocleavage and cleaves the polyprotein at dibasic sites in the cytoplasm: C-prM, NS2A-NS2B, NS2B-NS3, NS3-NS4A, NS4A-2K and NS4B-NS5. NS3 RNA helicase binds RNA and unwinds dsRNA in the 3' to 5' direction. Also plays a role in virus assembly. Functionally, regulates the ATPase activity of the NS3 helicase activity. NS4A allows NS3 helicase to conserve energy during unwinding. Functions as a signal peptide for NS4B and is required for the interferon antagonism activity of the latter. In terms of biological role, induces the formation of ER-derived membrane vesicles where the viral replication takes place. Inhibits interferon (IFN)-induced host STAT1 phosphorylation and nuclear translocation, thereby preventing the establishment of cellular antiviral state by blocking the IFN-alpha/beta pathway. Its function is as follows. Replicates the viral (+) and (-) RNA genome, and performs the capping of genomes in the cytoplasm. NS5 methylates viral RNA cap at guanine N-7 and ribose 2'-O positions. Besides its role in RNA genome replication, also prevents the establishment of cellular antiviral state by blocking the interferon-alpha/beta (IFN-alpha/beta) signaling pathway. IFN-I induces binding of NS5 to host IFN-activated transcription factor STAT2, preventing its transcriptional activity. Host TRIM23 is the E3 ligase that interacts with and polyubiquitinates NS5 to promote its binding to STAT2 and trigger IFN-I signaling inhibition. This Yellow fever virus (isolate Uganda/A7094A4/1948) (YFV) protein is Genome polyprotein.